A 154-amino-acid polypeptide reads, in one-letter code: D-aminoacyl-tRNA deacylase (154 aa).

A Gly-cisPro motif, important for rejection of L-amino acids motif is present at residues 142-143 (GP).

Belongs to the DTD family. As to quaternary structure, homodimer.

The protein resides in the cytoplasm. It carries out the reaction glycyl-tRNA(Ala) + H2O = tRNA(Ala) + glycine + H(+). It catalyses the reaction a D-aminoacyl-tRNA + H2O = a tRNA + a D-alpha-amino acid + H(+). Functionally, an aminoacyl-tRNA editing enzyme that deacylates mischarged D-aminoacyl-tRNAs. Also deacylates mischarged glycyl-tRNA(Ala), protecting cells against glycine mischarging by AlaRS. Acts via tRNA-based rather than protein-based catalysis; rejects L-amino acids rather than detecting D-amino acids in the active site. By recycling D-aminoacyl-tRNA to D-amino acids and free tRNA molecules, this enzyme counteracts the toxicity associated with the formation of D-aminoacyl-tRNA entities in vivo and helps enforce protein L-homochirality. The sequence is that of D-aminoacyl-tRNA deacylase from Acidovorax sp. (strain JS42).